The chain runs to 118 residues: Basic phospholipase A2 CM-III (118 aa).

7 cysteine pairs are disulfide-bonded: Cys11–Cys70, Cys26–Cys117, Cys28–Cys44, Cys43–Cys98, Cys50–Cys91, Cys59–Cys84, and Cys77–Cys89. 3 residues coordinate Ca(2+): Tyr27, Gly29, and Gly31. His47 is an active-site residue. Asp48 lines the Ca(2+) pocket. The Coagulation factor Xa binding motif motif lies at 52-69; the sequence is EKAGKMGCWPYFTLYKYK. The active site involves Asp92.

Belongs to the phospholipase A2 family. Group I subfamily. D49 sub-subfamily. Requires Ca(2+) as cofactor. In terms of tissue distribution, expressed by the venom gland.

It is found in the secreted. The catalysed reaction is a 1,2-diacyl-sn-glycero-3-phosphocholine + H2O = a 1-acyl-sn-glycero-3-phosphocholine + a fatty acid + H(+). Functionally, snake venom phospholipase A2 (PLA2) that shows several activities. It shows strong anticoagulant activity, probably by binding to coagulation factor Xa (F10) and inhibiting the formation of the prothrombinase complex, shows direct hemolytic action, causes neuromuscular blockade with a gradual contracture and a decreased sensitivity to ACh and KCl, abolishes twitches evoked by indirect stimulation earlier than those by direct stimulation (in the mouse phrenic nerve-diaphragm preparation), and causes myonecrosis when injected intramuscularly. PLA2 catalyzes the calcium-dependent hydrolysis of the 2-acyl groups in 3-sn-phosphoglycerides. The chain is Basic phospholipase A2 CM-III from Naja mossambica (Mozambique spitting cobra).